The chain runs to 116 residues: Putative UPF0320 protein YLL065W (116 aa).

Belongs to the UPF0320 family.

The protein is Putative UPF0320 protein YLL065W of Saccharomyces cerevisiae (strain ATCC 204508 / S288c) (Baker's yeast).